The chain runs to 325 residues: MRVENNNVSGQNHDPEQIDLIDLLVQLWRGKMTIIISVIVAIALAIGYLAVAKEKWTSTAIITQPDVGQIAGYNNAMNVIYGQAAPKVSDLQETLIGRFSSAFSALAETLDNQEEPEKLTIEPSVKNQQLPLTVSYVGQTAEGAQMKLAQYIQQVDDKVNQELEKDLKDNIALGRKNLQDSLRTQEVVAQEQKDLRIRQIQEALQYANQAQVTKPQIQQTQDVTQDTMFLLGSEALESMIKHEATRPLVFSSNYYQTRQNLLDIDNLDVDKLDIHAYRYVMKPTLPIRRDSPKKAITLILAVLLGGMVGAGIVLGRNALRNYNAK.

Topologically, residues 1-31 (MRVENNNVSGQNHDPEQIDLIDLLVQLWRGK) are cytoplasmic. A helical transmembrane segment spans residues 32-52 (MTIIISVIVAIALAIGYLAVA). The Periplasmic portion of the chain corresponds to 53-294 (KEKWTSTAII…LPIRRDSPKK (242 aa)). The chain crosses the membrane as a helical span at residues 295–315 (AITLILAVLLGGMVGAGIVLG). The Cytoplasmic segment spans residues 316–325 (RNALRNYNAK).

It belongs to the WzzB/Cld/Rol family.

It is found in the cell inner membrane. Its pathway is bacterial outer membrane biogenesis; lipopolysaccharide biosynthesis. Functionally, confers a modal distribution of chain length on the O-antigen component of lipopolysaccharide (LPS). Gives rise to a reduced number of short chain molecules and increases in numbers of longer molecules, with a modal value of 13 (in strain O111/M92) and of 17 (in strain K12). This Escherichia coli protein is Chain length determinant protein (wzzB).